We begin with the raw amino-acid sequence, 344 residues long: Autoinducer 2 import system permease protein LsrC (344 aa).

Helical transmembrane passes span 13–33, 38–58, 69–89, 90–110, 114–134, 155–175, 212–232, 251–271, and 283–303; these read FFAI…YFIL, MIFA…LVML, TVGL…GLAT, AIAF…LLVV, IPAI…MLLW, FIGV…GGWL, LNGM…GFVP, GISL…AFFL, and LPAW…LVLD. Residues 323-344 are disordered; that stretch reads QPGNKGSKQVARFPERKSKEVA. Positions 335 to 344 are enriched in basic and acidic residues; the sequence is FPERKSKEVA.

This sequence belongs to the binding-protein-dependent transport system permease family. AraH/RbsC subfamily. The complex is composed of two ATP-binding proteins (LsrA), two transmembrane proteins (LsrC and LsrD) and a solute-binding protein (LsrB).

The protein localises to the cell inner membrane. Its function is as follows. Part of the ABC transporter complex LsrABCD involved in autoinducer 2 (AI-2) import. Probably responsible for the translocation of the substrate across the membrane. This chain is Autoinducer 2 import system permease protein LsrC (lsrC), found in Klebsiella pneumoniae subsp. pneumoniae (strain ATCC 700721 / MGH 78578).